Here is a 344-residue protein sequence, read N- to C-terminus: L-rhamnose-proton symporter (344 aa).

The next 10 membrane-spanning stretches (helical) occupy residues 4 to 24, 38 to 58, 68 to 88, 101 to 121, 131 to 151, 175 to 195, 214 to 234, 259 to 279, 290 to 310, and 323 to 343; these read AITM…CFYA, WSVG…ATLL, FSAS…IGNI, MGIG…TPII, TQGG…VGIV, LLLA…MNAA, LPSY…FCFI, LLLS…YAWG, MSWM…GLVL, and VLSL…LGMA.

This sequence belongs to the L-rhamnose transporter (TC 2.A.7.6) family.

Its subcellular location is the cell inner membrane. The catalysed reaction is L-rhamnopyranose(in) + H(+)(in) = L-rhamnopyranose(out) + H(+)(out). In terms of biological role, uptake of L-rhamnose across the cytoplasmic membrane with the concomitant transport of protons into the cell (symport system). This Klebsiella pneumoniae subsp. pneumoniae (strain ATCC 700721 / MGH 78578) protein is L-rhamnose-proton symporter.